The sequence spans 165 residues: Disulfide bond formation protein B (165 aa).

Residues 1–10 (MPAWLTNRTI) are Cytoplasmic-facing. A helical membrane pass occupies residues 11–27 (YFLCFLAIAGLMGFAFY). Residues 28–45 (LQYVKDLEPCPLCMAQRI) lie on the Periplasmic side of the membrane. Residues Cys-37 and Cys-40 are joined by a disulfide bond. The helical transmembrane segment at 46–62 (AFVLAGLVFLAAALHNP) threads the bilayer. The Cytoplasmic portion of the chain corresponds to 63-68 (KNTGTT). Residues 69-86 (VYAFLGWVTTLGGAALAT) traverse the membrane as a helical segment. The Periplasmic portion of the chain corresponds to 87–143 (RQLWLQSLPADQVPACGPGLEYMLEAFPFSEVLTMMLTGTGECAEVQWTFLGLSIPG). Residues Cys-102 and Cys-129 are joined by a disulfide bond. A helical transmembrane segment spans residues 144-162 (WTLVAFIGFTAVWAFAWVR). Over 163–165 (RPR) the chain is Cytoplasmic.

The protein belongs to the DsbB family.

Its subcellular location is the cell inner membrane. Functionally, required for disulfide bond formation in some periplasmic proteins. Acts by oxidizing the DsbA protein. This Hahella chejuensis (strain KCTC 2396) protein is Disulfide bond formation protein B.